Here is a 276-residue protein sequence, read N- to C-terminus: Ribosomal RNA small subunit methyltransferase A (276 aa).

N27, L29, G54, E75, D101, and N122 together coordinate S-adenosyl-L-methionine.

It belongs to the class I-like SAM-binding methyltransferase superfamily. rRNA adenine N(6)-methyltransferase family. RsmA subfamily.

It is found in the cytoplasm. The enzyme catalyses adenosine(1518)/adenosine(1519) in 16S rRNA + 4 S-adenosyl-L-methionine = N(6)-dimethyladenosine(1518)/N(6)-dimethyladenosine(1519) in 16S rRNA + 4 S-adenosyl-L-homocysteine + 4 H(+). Specifically dimethylates two adjacent adenosines (A1518 and A1519) in the loop of a conserved hairpin near the 3'-end of 16S rRNA in the 30S particle. May play a critical role in biogenesis of 30S subunits. This chain is Ribosomal RNA small subunit methyltransferase A, found in Brucella abortus biovar 1 (strain 9-941).